Consider the following 496-residue polypeptide: Cobyric acid synthase (496 aa).

In terms of domain architecture, GATase cobBQ-type spans Lys256–Phe444. Cys337 functions as the Nucleophile in the catalytic mechanism. Residue His436 is part of the active site.

Belongs to the CobB/CobQ family. CobQ subfamily.

It participates in cofactor biosynthesis; adenosylcobalamin biosynthesis. In terms of biological role, catalyzes amidations at positions B, D, E, and G on adenosylcobyrinic A,C-diamide. NH(2) groups are provided by glutamine, and one molecule of ATP is hydrogenolyzed for each amidation. The polypeptide is Cobyric acid synthase (Phocaeicola vulgatus (strain ATCC 8482 / DSM 1447 / JCM 5826 / CCUG 4940 / NBRC 14291 / NCTC 11154) (Bacteroides vulgatus)).